A 34-amino-acid chain; its full sequence is Calcitonin-like peptide 2 (34 aa).

A disulfide bond links Cys-2 and Cys-7. Phenylalanine amide is present on Phe-34.

In Odorrana schmackeri (Schmacker's frog), this protein is Calcitonin-like peptide 2.